A 147-amino-acid polypeptide reads, in one-letter code: MEKTFLMVKPDGVQRNLIGEIVSRFEKKGYQLVGAKLMTVSRELAEEHYAEHKERPFFGELVDFITSGPVFAMVWQGNNVITTARAMMGKTNPVDAASGTIRGDFATSVGMNIIHGSDSPESAEREIGLWFSAEEVLSFEKTIQRWI.

6 residues coordinate ATP: Lys-9, Phe-57, Arg-85, Thr-91, Arg-102, and Asn-112. The active-site Pros-phosphohistidine intermediate is the His-115.

This sequence belongs to the NDK family. As to quaternary structure, homotetramer. Mg(2+) is required as a cofactor.

It is found in the cytoplasm. It carries out the reaction a 2'-deoxyribonucleoside 5'-diphosphate + ATP = a 2'-deoxyribonucleoside 5'-triphosphate + ADP. The catalysed reaction is a ribonucleoside 5'-diphosphate + ATP = a ribonucleoside 5'-triphosphate + ADP. In terms of biological role, major role in the synthesis of nucleoside triphosphates other than ATP. The ATP gamma phosphate is transferred to the NDP beta phosphate via a ping-pong mechanism, using a phosphorylated active-site intermediate. This chain is Nucleoside diphosphate kinase, found in Brevibacillus brevis (strain 47 / JCM 6285 / NBRC 100599).